The sequence spans 271 residues: Secretagogin (271 aa).

EF-hand domains lie at 8 to 43 (LDAA…LLKK), 53 to 88 (KVQG…EDEN), 100 to 135 (DNSV…LFLQ), 144 to 179 (KLDE…QENF), 192 to 227 (ERKS…MMEL), and 235 to 271 (VDLD…KANP). Positions 21, 23, 25, 27, and 32 each coordinate Ca(2+). Ca(2+) contacts are provided by Asp-113, Asp-115, Ser-117, Glu-124, Asn-159, Asp-161, Arg-163, Asp-168, Asp-205, Ser-207, Thr-209, Glu-216, Asp-249, Asn-251, Asp-253, Lys-255, and Glu-260.

Its subcellular location is the cytoplasm. The polypeptide is Secretagogin (scgn) (Xenopus laevis (African clawed frog)).